The sequence spans 345 residues: Glycerol-3-phosphate dehydrogenase [NAD(P)+] (345 aa).

Residues serine 11, tryptophan 12, histidine 32, arginine 33, and lysine 106 each coordinate NADPH. Lysine 106, glycine 137, and serine 139 together coordinate sn-glycerol 3-phosphate. Alanine 141 provides a ligand contact to NADPH. Sn-glycerol 3-phosphate is bound by residues lysine 192, aspartate 245, serine 255, arginine 256, and asparagine 257. The active-site Proton acceptor is the lysine 192. An NADPH-binding site is contributed by arginine 256. Residues valine 280 and glutamate 282 each coordinate NADPH.

This sequence belongs to the NAD-dependent glycerol-3-phosphate dehydrogenase family.

It localises to the cytoplasm. The catalysed reaction is sn-glycerol 3-phosphate + NAD(+) = dihydroxyacetone phosphate + NADH + H(+). The enzyme catalyses sn-glycerol 3-phosphate + NADP(+) = dihydroxyacetone phosphate + NADPH + H(+). Its pathway is membrane lipid metabolism; glycerophospholipid metabolism. Its activity is regulated as follows. Does not seem to be inhibited by sn-glycerol 3-phosphate, in contrast to the E.coli homolog enzyme which is very sensitive to allosteric inhibition by G3P. Functionally, catalyzes the reduction of the glycolytic intermediate dihydroxyacetone phosphate (DHAP) to sn-glycerol 3-phosphate (G3P), the key precursor for phospholipid synthesis. The chain is Glycerol-3-phosphate dehydrogenase [NAD(P)+] from Bacillus subtilis (strain 168).